The following is a 452-amino-acid chain: Protein EARLY-RESPONSIVE TO DEHYDRATION 7, chloroplastic (452 aa).

Positions 1-18 (MESSGDKQTSSLYPTVDT) are enriched in polar residues. The transit peptide at 1-28 (MESSGDKQTSSLYPTVDTSNPEAPINPS) directs the protein to the chloroplast. The disordered stretch occupies residues 1 to 37 (MESSGDKQTSSLYPTVDTSNPEAPINPSSSSSTNNLY). Residues 19-37 (SNPEAPINPSSSSSTNNLY) show a composition bias toward low complexity. The Senescence domain occupies 258–426 (IATGSGHLIK…AWVAFKIRKA (169 aa)).

Its subcellular location is the plastid. It localises to the chloroplast. The chain is Protein EARLY-RESPONSIVE TO DEHYDRATION 7, chloroplastic from Arabidopsis thaliana (Mouse-ear cress).